A 429-amino-acid chain; its full sequence is Tryptophan synthase beta chain 2 (429 aa).

Position 111 is an N6-(pyridoxal phosphate)lysine (Lys-111).

The protein belongs to the TrpB family. As to quaternary structure, tetramer of two alpha and two beta chains. Requires pyridoxal 5'-phosphate as cofactor.

It carries out the reaction (1S,2R)-1-C-(indol-3-yl)glycerol 3-phosphate + L-serine = D-glyceraldehyde 3-phosphate + L-tryptophan + H2O. Its pathway is amino-acid biosynthesis; L-tryptophan biosynthesis; L-tryptophan from chorismate: step 5/5. The beta subunit is responsible for the synthesis of L-tryptophan from indole and L-serine. The protein is Tryptophan synthase beta chain 2 (trpB2) of Saccharolobus solfataricus (strain ATCC 35092 / DSM 1617 / JCM 11322 / P2) (Sulfolobus solfataricus).